A 179-amino-acid chain; its full sequence is Large ribosomal subunit protein uL5 (179 aa).

Belongs to the universal ribosomal protein uL5 family. Part of the 50S ribosomal subunit; part of the 5S rRNA/L5/L18/L25 subcomplex. Contacts the 5S rRNA and the P site tRNA. Forms a bridge to the 30S subunit in the 70S ribosome.

Functionally, this is one of the proteins that bind and probably mediate the attachment of the 5S RNA into the large ribosomal subunit, where it forms part of the central protuberance. In the 70S ribosome it contacts protein S13 of the 30S subunit (bridge B1b), connecting the 2 subunits; this bridge is implicated in subunit movement. Contacts the P site tRNA; the 5S rRNA and some of its associated proteins might help stabilize positioning of ribosome-bound tRNAs. This chain is Large ribosomal subunit protein uL5, found in Rickettsia africae (strain ESF-5).